Reading from the N-terminus, the 154-residue chain is MGLLKAVVVLNGAADVKGVVQFTQEGDGPTTVTGKISGLSPGLHGFHVHALGDTTNGCMSTGPHFNPLGKEHGAPTDDNRHAGDLGNVTVGTDGTVEFSITDSQIPLSGPHSIVGRAVVVHADPDDLGKGGHELSKSTGNAGGRLACGVVGLQG.

3 residues coordinate Cu cation: H47, H49, and H64. A disulfide bridge connects residues C58 and C147. Residues H64, H72, H81, and D84 each contribute to the Zn(2+) site. Residue H121 participates in Cu cation binding.

The protein belongs to the Cu-Zn superoxide dismutase family. Homodimer. Requires Cu cation as cofactor. The cofactor is Zn(2+).

Its subcellular location is the cytoplasm. It catalyses the reaction 2 superoxide + 2 H(+) = H2O2 + O2. Functionally, destroys radicals which are normally produced within the cells and which are toxic to biological systems. The chain is Superoxide dismutase [Cu-Zn] (SODCC) from Pinus sylvestris (Scotch pine).